Reading from the N-terminus, the 667-residue chain is Endogenous retrovirus group K member 5 Gag polyprotein (667 aa).

Residue Gly-2 is the site of N-myristoyl glycine attachment. The segment at Lys-166–Gln-188 is disordered. 2 CCHC-type zinc fingers span residues Lys-543–Val-560 and Gly-580–Ser-597. The tract at residues Lys-598–Gln-667 is disordered. Polar residues predominate over residues Gly-648–Gln-667.

Belongs to the beta type-B retroviral Gag protein family. HERV class-II K(HML-2) gag subfamily. Post-translationally, myristoylation is essential for retroviral assembly. Alteration of the glycine residue leads to a block in the budding of particles and an accumulation of Gag inside the cell. Specific enzymatic cleavages may yield mature proteins.

It is found in the cell membrane. In terms of biological role, the products of the Gag polyproteins of infectious retroviruses perform highly complex orchestrated tasks during the assembly, budding, maturation, and infection stages of the viral replication cycle. During viral assembly, the proteins form membrane associations and self-associations that ultimately result in budding of an immature virion from the infected cell. Gag precursors also function during viral assembly to selectively bind and package two plus strands of genomic RNA. Endogenous Gag proteins may have kept, lost or modified their original function during evolution. The polypeptide is Endogenous retrovirus group K member 5 Gag polyprotein (ERVK-5) (Homo sapiens (Human)).